A 172-amino-acid chain; its full sequence is Xanthine-guanine phosphoribosyltransferase (172 aa).

Residues 47–48 (RG) and 106–114 (DDLVDTGKT) each bind 5-phospho-alpha-D-ribose 1-diphosphate. Residue D107 participates in Mg(2+) binding. Guanine is bound by residues D110 and I153. Residues D110 and I153 each contribute to the xanthine site. GMP-binding positions include 110-114 (DTGKT) and 152-153 (WI).

It belongs to the purine/pyrimidine phosphoribosyltransferase family. XGPT subfamily. Homotetramer. Requires Mg(2+) as cofactor.

It is found in the cell inner membrane. The catalysed reaction is GMP + diphosphate = guanine + 5-phospho-alpha-D-ribose 1-diphosphate. The enzyme catalyses XMP + diphosphate = xanthine + 5-phospho-alpha-D-ribose 1-diphosphate. It catalyses the reaction IMP + diphosphate = hypoxanthine + 5-phospho-alpha-D-ribose 1-diphosphate. It functions in the pathway purine metabolism; GMP biosynthesis via salvage pathway; GMP from guanine: step 1/1. Its pathway is purine metabolism; XMP biosynthesis via salvage pathway; XMP from xanthine: step 1/1. Its function is as follows. Purine salvage pathway enzyme that catalyzes the transfer of the ribosyl-5-phosphate group from 5-phospho-alpha-D-ribose 1-diphosphate (PRPP) to the N9 position of the 6-oxopurines guanine and xanthine to form the corresponding ribonucleotides GMP (guanosine 5'-monophosphate) and XMP (xanthosine 5'-monophosphate), with the release of PPi. To a lesser extent, also acts on hypoxanthine. The sequence is that of Xanthine-guanine phosphoribosyltransferase from Rhodopseudomonas palustris (strain BisB5).